A 209-amino-acid polypeptide reads, in one-letter code: J domain-containing protein spf31 (209 aa).

One can recognise a J domain in the interval 31-96 (NAYDVLDILP…KIRESLDSAY (66 aa)). Disordered regions lie at residues 149 to 175 (ANQQREQARQDEIARERKRRVESEKVW) and 187 to 209 (QDFLHKTKKNNLKKKNKKPRVLG). Positions 154 to 175 (EQARQDEIARERKRRVESEKVW) are enriched in basic and acidic residues. Residues 192–209 (KTKKNNLKKKNKKPRVLG) show a composition bias toward basic residues.

This Schizosaccharomyces pombe (strain 972 / ATCC 24843) (Fission yeast) protein is J domain-containing protein spf31 (spf31).